Reading from the N-terminus, the 366-residue chain is Ribosomal RNA large subunit methyltransferase M (366 aa).

S-adenosyl-L-methionine-binding positions include Ser188, 221–224 (CPGG), Asp240, Asp260, and Asp277. Catalysis depends on Lys306, which acts as the Proton acceptor.

It belongs to the class I-like SAM-binding methyltransferase superfamily. RNA methyltransferase RlmE family. RlmM subfamily. In terms of assembly, monomer.

It localises to the cytoplasm. The enzyme catalyses cytidine(2498) in 23S rRNA + S-adenosyl-L-methionine = 2'-O-methylcytidine(2498) in 23S rRNA + S-adenosyl-L-homocysteine + H(+). Functionally, catalyzes the 2'-O-methylation at nucleotide C2498 in 23S rRNA. This is Ribosomal RNA large subunit methyltransferase M from Escherichia coli O127:H6 (strain E2348/69 / EPEC).